Here is a 412-residue protein sequence, read N- to C-terminus: Protein translocase subunit SecY (412 aa).

9 helical membrane-spanning segments follow: residues 17-37, 58-78, 117-137, 143-163, 170-190, 251-271, 293-313, 350-370, and 372-392; these read IFLTIGLLVLSRLGTFIPVPG, IFSGGGFASIGIFALGIVPYI, ALGWAAIQSLGVSFWVRPYVF, FVVQMTLALTTGSMLIMWFSE, IGNGPSLLIFINIIAGLPKLI, VMPIIFASAILVLPAYLGQVI, YLIFYFSLILFFSYFYASLII, TFLGALFLAFIAVVPSIIENI, and SISTFKGLGATSLLILVGVAI.

Belongs to the SecY/SEC61-alpha family. In terms of assembly, component of the plastid Sec protein translocase complex, which is composed of at least SecY and SecE.

It localises to the plastid. Its subcellular location is the chloroplast thylakoid membrane. In terms of biological role, the central subunit of the protein translocation channel SecYE. Consists of two halves formed by TMs 1-5 and 6-10. These two domains form a lateral gate at the front which open onto the bilayer between TMs 2 and 7, and are clamped together by SecE at the back. The channel is closed by both a pore ring composed of hydrophobic SecY resides and a short helix (helix 2A) on the extracellular side of the membrane which forms a plug. The sequence is that of Protein translocase subunit SecY from Pyrenomonas salina.